Here is a 278-residue protein sequence, read N- to C-terminus: 4-deoxy-L-threo-5-hexosulose-uronate ketol-isomerase (278 aa).

Positions 196, 198, 203, and 245 each coordinate Zn(2+).

Belongs to the KduI family. Requires Zn(2+) as cofactor.

It catalyses the reaction 5-dehydro-4-deoxy-D-glucuronate = 3-deoxy-D-glycero-2,5-hexodiulosonate. The protein operates within glycan metabolism; pectin degradation; 2-dehydro-3-deoxy-D-gluconate from pectin: step 4/5. In terms of biological role, catalyzes the isomerization of 5-dehydro-4-deoxy-D-glucuronate to 3-deoxy-D-glycero-2,5-hexodiulosonate. This Salmonella paratyphi A (strain ATCC 9150 / SARB42) protein is 4-deoxy-L-threo-5-hexosulose-uronate ketol-isomerase.